We begin with the raw amino-acid sequence, 2671 residues long: Stalled ribosome sensor GCN1 (2671 aa).

Ala2 is modified (N-acetylalanine). 10 HEAT repeats span residues 140–178 (NKLV…ENPG), 257–293 (EFKD…LDLS), 294–331 (QYAM…QCSD), 385–423 (IVAE…EVPK), 425–459 (LTEW…GDTL), 460–503 (LQAL…SVAD), 560–597 (NKVQ…SLGG), 599–636 (KLAH…AGKA), 697–732 (DPEA…SLSV), and 733–770 (LSPD…QTPA). At Ser729 the chain carries Phosphoserine. The residue at position 786 (Ser786) is a Phosphoserine. Residues 804 to 863 (QIIELELKEEIKKKKGIKEEVQLTSKQKEMLQAQLDREAQVRRRLQELDGELEAALGLLD) adopt a coiled-coil conformation. HEAT repeat units follow at residues 879–925 (VLVD…HVTL), 979–1016 (SLVF…QAQL), 1035–1072 (LPRV…SSSG), 1078–1115 (FAEQ…VLPA), 1155–1192 (DLQP…RYQR), 1210–1250 (YRPP…YLDS), 1251–1289 (SQVK…THGK), 1290–1332 (ENVN…HLDK), 1335–1372 (PKVK…AIKE), 1374–1410 (AGGM…GLGI), 1413–1451 (LKQQ…MLGK), 1455–1492 (PYVV…NLSA), 1493–1530 (HGVK…CAPK), 1534–1571 (SCLP…VIRN), 1573–1609 (EILA…HFID), 1611–1648 (PSLA…LTDQ), 1653–1690 (PYLP…GMGE), 1692–1729 (CFED…GLGV), 1731–1769 (KLEK…TFGD), 1773–1810 (PYVG…MYAE), 1812–1848 (AIAL…HISG), 1921–1958 (EILP…KLGE), 1959–1996 (KILP…STSR), 2001–2038 (YFSE…TIGH), 2039–2076 (QALE…SRVV), 2078–2106 (PYLV…DALT), 2107–2146 (RHLG…VEDD), 2147–2184 (TGHR…RSKA), 2188–2225 (SHLR…KLDA), 2259–2296 (KGVT…LTSA), 2301–2338 (PSVV…AKVG), 2339–2380 (IALK…IHIK), 2382–2417 (DPLF…GAGA), 2422–2459 (VIRK…FLTE), 2546–2583 (QLPA…DPLP), and 2588–2625 (QAIK…MRQG). An RWDBD region region spans residues 2260-2408 (GVTSILPVLR…GVRDTMLQAL (149 aa)). Ser2276 bears the Phosphoserine mark. The stretch at 2627 to 2661 (EVFQSLSKILDVASLEVLNEVNRRSLKKLASQADS) is one HEAT 47; degenerate repeat.

Belongs to the GCN1 family. As to quaternary structure, interacts with EIF2AK4/GCN2; this interaction stimulates the EIF2AK4/GCN2 kinase activity and is impaired by IMPACT upon a variety of stress conditions, such as amino acid depletion, UV-C irradiation, proteasome inhibitor treatment and glucose deprivation. Interacts with IMPACT; this prevents the interaction of GCN1 with EIF2AK4/GCN2 and inhibits EIF2AK4/GCN2 kinase activity. Interacts with RNF14; interaction takes place following ribosome stalling and promotes recruitment of RNF14. As to expression, ubiquitously expressed. Expressed in skeletal muscules, ovary and testis.

The protein localises to the cytoplasm. Functionally, ribosome collision sensor that plays a key role in the RNF14-RNF25 translation quality control pathway, a pathway that takes place when a ribosome has stalled during translation, and which promotes ubiquitination and degradation of translation factors on stalled ribosomes. Directly binds to the ribosome and acts as a sentinel for colliding ribosomes: activated following ribosome stalling and promotes recruitment of RNF14, which directly ubiquitinates EEF1A1/eEF1A, leading to its degradation. In addition to EEF1A1/eEF1A, the RNF14-RNF25 translation quality control pathway mediates degradation of ETF1/eRF1 and ubiquitination of ribosomal protein. GCN1 also acts as a positive activator of the integrated stress response (ISR) by mediating activation of EIF2AK4/GCN2 in response to amino acid starvation. Interaction with EIF2AK4/GCN2 on translating ribosomes stimulates EIF2AK4/GCN2 kinase activity, leading to phosphorylation of eukaryotic translation initiation factor 2 (eIF-2-alpha/EIF2S1). EIF2S1/eIF-2-alpha phosphorylation converts EIF2S1/eIF-2-alpha into a global protein synthesis inhibitor, leading to a global attenuation of cap-dependent translation, and thus to a reduced overall utilization of amino acids, while concomitantly initiating the preferential translation of ISR-specific mRNAs, such as the transcriptional activator ATF4, and hence allowing ATF4-mediated reprogramming of amino acid biosynthetic gene expression to alleviate nutrient depletion. In Homo sapiens (Human), this protein is Stalled ribosome sensor GCN1.